A 1097-amino-acid chain; its full sequence is UPF0746 protein DDB_G0281095 (1097 aa).

The segment covering 1 to 11 has biased composition (basic and acidic residues); it reads MVNNNKRKEIE. The interval 1–24 is disordered; that stretch reads MVNNNKRKEIENQENDNDDDNDGL. Acidic residues predominate over residues 12 to 22; sequence NQENDNDDDND. One can recognise an SAP domain in the interval 35–69; the sequence is YDSIRSKELQTIAKSLGLPNNGKKQEVYKRIEGYF. Residues 329-521 are a coiled coil; that stretch reads FKEIREIHQQ…QLILELNEIQ (193 aa).

This sequence belongs to the UPF0746 family.

The sequence is that of UPF0746 protein DDB_G0281095 from Dictyostelium discoideum (Social amoeba).